The primary structure comprises 101 residues: Interleukin-8 (101 aa).

Residues 1–22 form the signal peptide; it reads MTSKLAVALLAAFLLSAALCEA. Intrachain disulfides connect Cys34/Cys61 and Cys36/Cys77.

The protein belongs to the intercrine alpha (chemokine CxC) family. As to quaternary structure, homodimer. Interacts with TNFAIP6 (via Link domain); this interaction interferes with chemokine binding to glycosaminoglycans.

It is found in the secreted. Chemotactic factor that mediates inflammatory response by attracting neutrophils, basophils, and T-cells to clear pathogens and protect the host from infection. Also plays an important role in neutrophil activation. Released in response to an inflammatory stimulus, exerts its effect by binding to the G-protein-coupled receptors CXCR1 and CXCR2, primarily found in neutrophils, monocytes and endothelial cells. G-protein heterotrimer (alpha, beta, gamma subunits) constitutively binds to CXCR1/CXCR2 receptor and activation by IL8 leads to beta and gamma subunits release from Galpha (GNAI2 in neutrophils) and activation of several downstream signaling pathways including PI3K and MAPK pathways. This chain is Interleukin-8 (CXCL8), found in Bos taurus (Bovine).